A 357-amino-acid chain; its full sequence is Outer membrane protein YedS (357 aa).

An N-terminal signal peptide occupies residues 1-21 (MKRKVLAMLVPALLVAGAANA).

It belongs to the Gram-negative porin family.

It is found in the cell outer membrane. In terms of biological role, forms pores that allow passive diffusion of small molecules across the outer membrane. Plays a role in resistance to carbapenems; this carbapenem-resistant, noncarbapenemase-producing clinical isolate has a deletion in ompF and a mutated marR gene that does not induce expression of this protein. However if this gene is overexpressed, or if wild-type marR is introduced, this leads to decreased resistance to the carbapenem antibiotics ertapenem, imipenem and meropenem. This chain is Outer membrane protein YedS, found in Escherichia coli.